Consider the following 487-residue polypeptide: L-tartrate/succinate antiporter (487 aa).

The next 14 helical transmembrane spans lie at 10-30, 33-53, 54-74, 93-113, 137-157, 189-209, 230-250, 292-312, 313-333, 340-360, 370-390, 393-413, 418-438, and 465-485; these read YLAP…AGLE, TWLY…EPVP, GAVV…WLLF, WAVS…FMFG, TLFL…VTPS, IGSY…AIFL, LSWG…VLLV, LMVG…AAMV, GYSV…DIVS, VFFW…TGFI, SLSG…FYLL, FFAS…AAAL, IPLP…SILT, and IFGL…MPVV.

The protein belongs to the SLC13A/DASS transporter (TC 2.A.47) family. DIT1 subfamily.

The protein localises to the cell inner membrane. It carries out the reaction (2R,3R)-tartrate(out) + succinate(in) = (2R,3R)-tartrate(in) + succinate(out). Its function is as follows. Catalyzes the uptake of tartrate in exchange for intracellular succinate. Essential for anaerobic L-tartrate fermentation. The polypeptide is L-tartrate/succinate antiporter (ttdT) (Shigella dysenteriae serotype 1 (strain Sd197)).